Here is a 273-residue protein sequence, read N- to C-terminus: Imidazole glycerol phosphate synthase subunit HisF (273 aa).

Active-site residues include D11 and D134.

Belongs to the HisA/HisF family. Heterodimer of HisH and HisF.

The protein resides in the cytoplasm. It catalyses the reaction 5-[(5-phospho-1-deoxy-D-ribulos-1-ylimino)methylamino]-1-(5-phospho-beta-D-ribosyl)imidazole-4-carboxamide + L-glutamine = D-erythro-1-(imidazol-4-yl)glycerol 3-phosphate + 5-amino-1-(5-phospho-beta-D-ribosyl)imidazole-4-carboxamide + L-glutamate + H(+). Its pathway is amino-acid biosynthesis; L-histidine biosynthesis; L-histidine from 5-phospho-alpha-D-ribose 1-diphosphate: step 5/9. Functionally, IGPS catalyzes the conversion of PRFAR and glutamine to IGP, AICAR and glutamate. The HisF subunit catalyzes the cyclization activity that produces IGP and AICAR from PRFAR using the ammonia provided by the HisH subunit. This Methanosarcina mazei (strain ATCC BAA-159 / DSM 3647 / Goe1 / Go1 / JCM 11833 / OCM 88) (Methanosarcina frisia) protein is Imidazole glycerol phosphate synthase subunit HisF.